The following is a 388-amino-acid chain: Flap endonuclease 1 (388 aa).

Positions 1-104 (MGILGLSKLI…GELAKRAERR (104 aa)) are N-domain. Aspartate 34 lines the Mg(2+) pocket. DNA contacts are provided by arginine 47 and arginine 70. Mg(2+) contacts are provided by aspartate 86, glutamate 158, glutamate 160, aspartate 179, and aspartate 181. The segment at 122–253 (EIEKFNRRLV…KRAIELINNY (132 aa)) is I-domain. Glutamate 158 contributes to the DNA binding site. 2 residues coordinate DNA: glycine 231 and aspartate 233. Mg(2+) is bound at residue aspartate 233. An interaction with PCNA region spans residues 336–344 (TQVRLDSFF). Residues 343–388 (FFKTLPSTPSATNAAKRKAEEAKKSANNKKAKTSGGGGGGRGRRPK) form a disordered region.

This sequence belongs to the XPG/RAD2 endonuclease family. FEN1 subfamily. In terms of assembly, interacts with PCNA. Three molecules of FEN1 bind to one PCNA trimer with each molecule binding to one PCNA monomer. PCNA stimulates the nuclease activity without altering cleavage specificity. The cofactor is Mg(2+). Phosphorylated. Phosphorylation upon DNA damage induces relocalization to the nuclear plasma.

The protein localises to the nucleus. It localises to the nucleolus. Its subcellular location is the nucleoplasm. The protein resides in the mitochondrion. Functionally, structure-specific nuclease with 5'-flap endonuclease and 5'-3' exonuclease activities involved in DNA replication and repair. During DNA replication, cleaves the 5'-overhanging flap structure that is generated by displacement synthesis when DNA polymerase encounters the 5'-end of a downstream Okazaki fragment. It enters the flap from the 5'-end and then tracks to cleave the flap base, leaving a nick for ligation. Also involved in the long patch base excision repair (LP-BER) pathway, by cleaving within the apurinic/apyrimidinic (AP) site-terminated flap. Acts as a genome stabilization factor that prevents flaps from equilibrating into structures that lead to duplications and deletions. Also possesses 5'-3' exonuclease activity on nicked or gapped double-stranded DNA, and exhibits RNase H activity. Also involved in replication and repair of rDNA and in repairing mitochondrial DNA. The protein is Flap endonuclease 1 of Drosophila ananassae (Fruit fly).